Reading from the N-terminus, the 527-residue chain is Phosphoenolpyruvate carboxykinase (ATP) (527 aa).

3 residues coordinate substrate: R55, Y191, and K197. Residues K197, H216, and 232 to 240 (GLSGTGKTT) contribute to the ATP site. Residues K197 and H216 each contribute to the Mn(2+) site. Residue D253 participates in Mn(2+) binding. The ATP site is built by E281, R318, and T443. Position 318 (R318) interacts with substrate.

Belongs to the phosphoenolpyruvate carboxykinase (ATP) family. The cofactor is Mn(2+).

The protein localises to the cytoplasm. The catalysed reaction is oxaloacetate + ATP = phosphoenolpyruvate + ADP + CO2. It participates in carbohydrate biosynthesis; gluconeogenesis. Functionally, involved in the gluconeogenesis. Catalyzes the conversion of oxaloacetate (OAA) to phosphoenolpyruvate (PEP) through direct phosphoryl transfer between the nucleoside triphosphate and OAA. This Brevibacillus brevis (strain 47 / JCM 6285 / NBRC 100599) protein is Phosphoenolpyruvate carboxykinase (ATP).